The chain runs to 2624 residues: Transcription factor TFIIIB component B'' homolog (2624 aa).

The interval 1-142 (MFRRARLSVK…TKEKQPCSDR (142 aa)) is disordered. The interval 1–299 (MFRRARLSVK…TYSSFRKNYY (299 aa)) is interaction with ZBTB43. The span at 63–77 (PQEKAPRSSTEKTGG) shows a compositional bias: basic and acidic residues. A compositionally biased stretch (low complexity) spans 99–119 (SSTSSLVKSSVSVPSESHPLS). Polar residues predominate over residues 120–132 (TINQEAPQPTATS). Positions 133–142 (TKEKQPCSDR) are enriched in basic and acidic residues. Residues 144–177 (RIYKAQKLREMLKEELRKEKKQWKNKYAINESQR) are a coiled coil. The interval 193-241 (LPDNNPMTSSLEQEKKTEKPSTPVQTREQEGKSTPNAEDNEMEEETDDG) is disordered. Residues 212–229 (PSTPVQTREQEGKSTPNA) show a composition bias toward polar residues. Residues 230–240 (EDNEMEEETDD) are compositionally biased toward acidic residues. The Myb-like domain occupies 295–345 (RKNYYSKPWSNKETDMFFLAISMVGTDFSMIGQLFPHRARIEIKNKFKREE). The tract at residues 355-470 (AFQEKRPFDF…QKKRRRKKQD (116 aa)) is required for phosphorylation by CSNK2A1. 4 disordered regions span residues 379–449 (EKRK…SRED), 544–567 (LSLSNQQDATSVATESSESSTSDL), 606–663 (ENVK…MNTL), and 729–759 (EEIGANVEKNENESCADRDTPQHMEDQSRKD). Positions 397 to 407 (TKPRKNVKVKK) are enriched in basic residues. Residues 552 to 565 (ATSVATESSESSTS) show a composition bias toward low complexity. Basic and acidic residues-rich tracts occupy residues 637–663 (TESESKNSHSKTSVEKNHVEKDKMNTL) and 736–759 (EKNENESCADRDTPQHMEDQSRKD). Residues 823 to 877 (GRREISSKEEVLEKILVSGEMAAALRETVRLDTSPKEMVPAEINTKEMQSDLKET) form a 1; approximate repeat. The interval 823-1327 (GRREISSKEE…PRENELEETS (505 aa)) is 9 X 55 AA repeats of G-R-R-X-I-S-P-X-E-N-G-X-E-E-V-K-P-X-X-E-M-E-T-D-L-K-X-T-G-R-E-X-X-X-R-E-K-T-X-E-X-X-D-A-X-E-E-I-D-X-D-L-E-E-T. 6 repeat units span residues 878-932 (GRRA…LEEA), 933-987 (GRRE…LEET), 988-1040 (GRRK…LEET), 1041-1094 (EREV…LEET), 1095-1148 (EREI…LEET), and 1149-1203 (GRRE…LEET). The residue at position 915 (T915) is a Phosphothreonine. 2 stretches are compositionally biased toward basic and acidic residues: residues 930-957 (EEAGRREISPQKNGPEEVKPLGEVETDL) and 979-1006 (EIDKNLEETGRRKISPRENGPEEVKPVD). Residues 930–1222 (EEAGRREISP…GPEEVKPVGK (293 aa)) form a disordered region. The span at 1030–1041 (DATEEIDLEETE) shows a compositional bias: acidic residues. A compositionally biased stretch (basic and acidic residues) spans 1052–1079 (EEVKPLGEMETDLKATGRDSFPRGKTPE). The stretch at 1078-1103 (PEVIDAIEEIEIDLEETEREISPQEN) forms a coiled coil. Acidic residues predominate over residues 1082–1095 (DAIEEIEIDLEETE). Residues 1120–1133 (ATGREISPREKTPE) show a composition bias toward basic and acidic residues. Residues 1136-1145 (DATEEIDKDL) are compositionally biased toward acidic residues. Positions 1161 to 1190 (EEVKPVDEMETDLKTTGREGSSREKTREVI) are enriched in basic and acidic residues. A compositionally biased stretch (acidic residues) spans 1194–1204 (EVIETDLEETE). The 8; approximate repeat unit spans residues 1204-1257 (EREISPQENGPEEVKPVGKMETDLKEIREEISQREKVLAEFSAIREKEIDLKET). The stretch at 1223–1284 (METDLKEIRE…VEEMEADLKE (62 aa)) forms a coiled coil. Residues 1258–1327 (GKRDIPIMEK…PRENELEETS (70 aa)) form a 9; approximate repeat. Residues 1306–1321 (AELKQTGKTDISPREN) are compositionally biased toward basic and acidic residues. Disordered regions lie at residues 1306-1348 (AELK…SAVP), 1365-1440 (TPVE…RFKR), 1519-1543 (TERNLSPSNSCEPKEESQSAPVQKN), 1684-1722 (KAKPNLGRAHSKKEEPVLEKVTTDQSKEGKPEDHLLQKG), 1819-1863 (STSE…ASKA), 2130-2164 (GAEMETQRETEKNASKATELENKNLGPVTTAENKD), 2181-2200 (SEVNLTERNENQEESSQEVH), 2207-2241 (VASSETGPCTLGLDRGLGENSVEEPQIKDSKGDSV), 2444-2501 (FQSR…SRPG), and 2519-2566 (SDEP…PSPS). Positions 1326–1344 (TSTSRQTDTHLMQSGSNDF) are enriched in polar residues. Positions 1366-1378 (PVEEKRNSEKEVS) are enriched in basic and acidic residues. Polar residues-rich tracts occupy residues 1379-1390 (SHFSHFKISSQT), 1411-1421 (SDINLSKSLPQ), and 1519-1529 (TERNLSPSNSC). Residues 1695–1719 (KKEEPVLEKVTTDQSKEGKPEDHLL) are compositionally biased toward basic and acidic residues. Over residues 1844–1853 (RGSKRVRGKT) the composition is skewed to basic residues. Over residues 2131–2151 (AEMETQRETEKNASKATELEN) the composition is skewed to basic and acidic residues. A compositionally biased stretch (basic and acidic residues) spans 2470–2479 (VSDKEERTDA). Low complexity predominate over residues 2488–2498 (SRTSSSKASLS). Residues 2526–2544 (HSKKRLKPLIPGLRKKLKR) are compositionally biased toward basic residues.

In terms of assembly, component of TFIIIB complex. The TFIIIB complex has two activities, alpha and beta. The TFIIIB-alpha and TFIIIB-beta activities are required for transcription of genes with TFIIIC-bound internal promoters and PSE transcription factor-bound external promoters, respectively. The TFIIIB-alpha activity complex is composed of TBP, BDP1, and a complex containing both BRF2 and at least four stably associated proteins; YY1 facilitates the formation of TFIIIB-alpha activity complex. The TFIIIB-beta activity complex is composed of TBP, BDP1, and BRF1. Interacts with BRF1; this interaction diminishes during mitosis resulting in the release of BDP1 from chromosomal templates. Component of TFIIIC complex. The TFIIIC complex has two activities, C1 and C2. The TFIIIC2 activity complex is only required for transcription of the 'classical' pol III genes whereas the TFIIIC1 activity complex is required for transcription of all pol III genes. The TFIIIC1 activity complex is composed at least of BDP1. Interacts with ZBTB43. In terms of processing, phosphorylated by CSNK2A1 during mitosis, resulting in its release from chromatin and suppression of polymerase III transcription. As to expression, isoform 2 is highly expressed in cerebellum.

The protein resides in the nucleus. Functionally, general activator of RNA polymerase III transcription. Requires for transcription from all three types of polymerase III promoters. Requires for transcription of genes with internal promoter elements and with promoter elements upstream of the initiation site. The sequence is that of Transcription factor TFIIIB component B'' homolog (BDP1) from Homo sapiens (Human).